The sequence spans 431 residues: Tol-Pal system protein TolB (431 aa).

The first 26 residues, 1–26 (MRLMTKLGFRALVASCLIAAGAAANA), serve as a signal peptide directing secretion. Residues 411-431 (PQILSVQGGSVREPSWGPFMQ) are disordered.

The protein belongs to the TolB family. As to quaternary structure, the Tol-Pal system is composed of five core proteins: the inner membrane proteins TolA, TolQ and TolR, the periplasmic protein TolB and the outer membrane protein Pal. They form a network linking the inner and outer membranes and the peptidoglycan layer.

The protein resides in the periplasm. Its function is as follows. Part of the Tol-Pal system, which plays a role in outer membrane invagination during cell division and is important for maintaining outer membrane integrity. The protein is Tol-Pal system protein TolB of Burkholderia ambifaria (strain ATCC BAA-244 / DSM 16087 / CCUG 44356 / LMG 19182 / AMMD) (Burkholderia cepacia (strain AMMD)).